Consider the following 265-residue polypeptide: Chlorophyll a-b binding protein 1C, chloroplastic (265 aa).

Residues 1–34 (MAAATMALSSPSFAGQAVKLSPSASEISGNGRIT) constitute a chloroplast transit peptide. A helical transmembrane segment spans residues 151 to 171 (LVHAQSILAIWACQVVLMGAV). 6 residues coordinate chlorophyll b: valine 152, serine 156, glutamine 164, glutamate 172, arginine 175, and leucine 181. Chlorophyll a-binding residues include lysine 212, glutamate 213, asparagine 216, arginine 218, glutamine 230, histidine 245, and alanine 254. Residues 219–239 (LAMFSMFGFFVQAIVTGKGPL) traverse the membrane as a helical segment. Phenylalanine 261 serves as a coordination point for chlorophyll b.

The protein belongs to the light-harvesting chlorophyll a/b-binding (LHC) protein family. In terms of assembly, the LHC complex consists of chlorophyll a-b binding proteins. The cofactor is Binds at least 14 chlorophylls (8 Chl-a and 6 Chl-b) and carotenoids such as lutein and neoxanthin.. Photoregulated by reversible phosphorylation of its threonine residues.

The protein localises to the plastid. It is found in the chloroplast thylakoid membrane. The light-harvesting complex (LHC) functions as a light receptor, it captures and delivers excitation energy to photosystems with which it is closely associated. The chain is Chlorophyll a-b binding protein 1C, chloroplastic (CAB1C) from Solanum lycopersicum (Tomato).